We begin with the raw amino-acid sequence, 423 residues long: Serine/threonine-protein kinase ppk25 (423 aa).

Ser36 and Ser38 each carry phosphoserine. The Protein kinase domain maps to 53–305; that stretch reads WIIKKTIGAG…LEQAAKFPWL (253 aa). ATP is bound by residues 59–67 and Lys82; that span reads IGAGSMGKV. Asp175 acts as the Proton acceptor in catalysis.

Belongs to the protein kinase superfamily. Ser/Thr protein kinase family.

The protein localises to the cytoplasm. It catalyses the reaction L-seryl-[protein] + ATP = O-phospho-L-seryl-[protein] + ADP + H(+). The catalysed reaction is L-threonyl-[protein] + ATP = O-phospho-L-threonyl-[protein] + ADP + H(+). The chain is Serine/threonine-protein kinase ppk25 (ppk25) from Schizosaccharomyces pombe (strain 972 / ATCC 24843) (Fission yeast).